The chain runs to 235 residues: Large ribosomal subunit protein uL1 (235 aa).

The protein belongs to the universal ribosomal protein uL1 family. Part of the 50S ribosomal subunit.

Functionally, binds directly to 23S rRNA. The L1 stalk is quite mobile in the ribosome, and is involved in E site tRNA release. In terms of biological role, protein L1 is also a translational repressor protein, it controls the translation of the L11 operon by binding to its mRNA. This is Large ribosomal subunit protein uL1 from Rhodospirillum centenum (strain ATCC 51521 / SW).